The sequence spans 874 residues: Coatomer subunit gamma-1 (874 aa).

The span at 1–11 (MLKKFDKKDEE) shows a compositional bias: basic and acidic residues. The tract at residues 1–21 (MLKKFDKKDEESGGGSNPLQH) is disordered. HEAT repeat units lie at residues 64–101 (TEAT…IAED), 283–320 (KELA…KHPS), 322–355 (VTAC…GSES), and 356–392 (SIDR…KYPR). Position 594 is a phosphothreonine (threonine 594). Positions 609–874 (RQEIFQEQLA…PVDIILASVG (266 aa)) are interaction with ZNF289/ARFGAP2.

The protein belongs to the COPG family. As to quaternary structure, oligomeric complex that consists of at least the alpha, beta, beta', gamma, delta, epsilon and zeta subunits. Interacts with ZNF289/ARFGAP2 through its C-terminal appendage domain. Interacts with EGFR upon EGF treatment; interaction is essential for regulation of EGF-dependent nuclear transport of EGFR by retrograde trafficking from the Golgi to the ER. The coatomer interacts with KDEL receptors; the interaction is important for retrograde trafficking of KDEL-bearing proteins from the Golgi to the endoplasmic reticulum. Interacts with COPB1. Interacts with TMED10 (via C-terminus). Interacts with TMED2, TMED3, TMED7 and TMED9.

Its subcellular location is the cytoplasm. The protein resides in the cytosol. It is found in the golgi apparatus membrane. The protein localises to the cytoplasmic vesicle. It localises to the COPI-coated vesicle membrane. Functionally, the coatomer is a cytosolic protein complex that binds to dilysine motifs and reversibly associates with Golgi non-clathrin-coated vesicles, which further mediate biosynthetic protein transport from the ER, via the Golgi up to the trans Golgi network. Coatomer complex is required for budding from Golgi membranes, and is essential for the retrograde Golgi-to-ER transport of dilysine-tagged proteins. In mammals, the coatomer can only be recruited by membranes associated to ADP-ribosylation factors (ARFs), which are small GTP-binding proteins; the complex also influences the Golgi structural integrity, as well as the processing, activity, and endocytic recycling of LDL receptors. Required for limiting lipid storage in lipid droplets. Involved in lipid homeostasis by regulating the presence of perilipin family members PLIN2 and PLIN3 at the lipid droplet surface and promoting the association of adipocyte triglyceride lipase (PNPLA2) with the lipid droplet surface to mediate lipolysis. The polypeptide is Coatomer subunit gamma-1 (Copg1) (Mus musculus (Mouse)).